We begin with the raw amino-acid sequence, 233 residues long: Biosynthetic peptidoglycan transglycosylase (233 aa).

A helical membrane pass occupies residues 8 to 28 (LIALPVGIFIFFNAYVYGNII).

It belongs to the glycosyltransferase 51 family.

It localises to the cell inner membrane. The catalysed reaction is [GlcNAc-(1-&gt;4)-Mur2Ac(oyl-L-Ala-gamma-D-Glu-L-Lys-D-Ala-D-Ala)](n)-di-trans,octa-cis-undecaprenyl diphosphate + beta-D-GlcNAc-(1-&gt;4)-Mur2Ac(oyl-L-Ala-gamma-D-Glu-L-Lys-D-Ala-D-Ala)-di-trans,octa-cis-undecaprenyl diphosphate = [GlcNAc-(1-&gt;4)-Mur2Ac(oyl-L-Ala-gamma-D-Glu-L-Lys-D-Ala-D-Ala)](n+1)-di-trans,octa-cis-undecaprenyl diphosphate + di-trans,octa-cis-undecaprenyl diphosphate + H(+). It participates in cell wall biogenesis; peptidoglycan biosynthesis. Functionally, peptidoglycan polymerase that catalyzes glycan chain elongation from lipid-linked precursors. The chain is Biosynthetic peptidoglycan transglycosylase from Neisseria meningitidis serogroup C / serotype 2a (strain ATCC 700532 / DSM 15464 / FAM18).